Here is a 479-residue protein sequence, read N- to C-terminus: Catalase A (479 aa).

H63 is an active-site residue. Y346 provides a ligand contact to heme.

It belongs to the catalase family. Requires heme as cofactor.

It is found in the peroxisome matrix. The catalysed reaction is 2 H2O2 = O2 + 2 H2O. Its function is as follows. Catalyzes the degradation of hydrogen peroxide (H(2)O(2)) generated by peroxisomal oxidases to water and oxygen, thereby protecting cells from the toxic effects of hydrogen peroxide. This is Catalase A (catA) from Botryotinia fuckeliana (Noble rot fungus).